Reading from the N-terminus, the 255-residue chain is PABIR family member 2 (255 aa).

The tract at residues 1-24 (MAQEKMDLDFEADTSEGATLRRSN) is disordered. N-acetylalanine is present on A2. Phosphoserine occurs at positions 25, 33, 50, and 58. Position 112 is a phosphothreonine (T112). Residues S115 and S119 each carry the phosphoserine modification. R122 carries the post-translational modification Omega-N-methylarginine. S145 is subject to Phosphoserine. Disordered regions lie at residues 169–196 (LGPL…SMLS) and 219–238 (SGLS…SPVA). Basic and acidic residues predominate over residues 174–184 (RKGEMEMESQP).

The protein belongs to the FAM122 family.

The sequence is that of PABIR family member 2 from Mus musculus (Mouse).